Reading from the N-terminus, the 410-residue chain is Acetate kinase (410 aa).

N7 is a Mg(2+) binding site. K14 is a binding site for ATP. R88 is a substrate binding site. Residue D145 is the Proton donor/acceptor of the active site. ATP-binding positions include H203–G207, D278–R280, and G326–N330. E379 contributes to the Mg(2+) binding site.

It belongs to the acetokinase family. As to quaternary structure, homodimer. The cofactor is Mg(2+). Mn(2+) serves as cofactor.

The protein localises to the cytoplasm. The catalysed reaction is acetate + ATP = acetyl phosphate + ADP. The protein operates within metabolic intermediate biosynthesis; acetyl-CoA biosynthesis; acetyl-CoA from acetate: step 1/2. Catalyzes the formation of acetyl phosphate from acetate and ATP. Can also catalyze the reverse reaction. In Onion yellows phytoplasma (strain OY-M), this protein is Acetate kinase.